The chain runs to 481 residues: Argininosuccinate synthase (481 aa).

Residues 17 to 25 (AFSGGLDTS) and A43 contribute to the ATP site. Y99 is an L-citrulline binding site. Residues G129 and T131 each contribute to the ATP site. 3 residues coordinate L-aspartate: T131, N135, and D136. Residue N135 participates in L-citrulline binding. D136 provides a ligand contact to ATP. L-citrulline-binding residues include R139 and S192. D194 contacts ATP. L-citrulline-binding residues include T201, E203, and E280.

This sequence belongs to the argininosuccinate synthase family. Type 2 subfamily. As to quaternary structure, homotetramer.

The protein localises to the cytoplasm. It catalyses the reaction L-citrulline + L-aspartate + ATP = 2-(N(omega)-L-arginino)succinate + AMP + diphosphate + H(+). Its pathway is amino-acid biosynthesis; L-arginine biosynthesis; L-arginine from L-ornithine and carbamoyl phosphate: step 2/3. In Streptomyces coelicolor (strain ATCC BAA-471 / A3(2) / M145), this protein is Argininosuccinate synthase (argG).